A 1020-amino-acid polypeptide reads, in one-letter code: Protein translocase subunit SecA (1020 aa).

Residues Gln-99, Gly-117–Thr-121, and Asp-633 contribute to the ATP site. Residues Asn-963–Val-992 form a disordered region. The segment covering Glu-978–Pro-987 has biased composition (basic and acidic residues). Zn(2+) contacts are provided by Cys-1002, Cys-1004, Cys-1013, and Cys-1014.

This sequence belongs to the SecA family. As to quaternary structure, monomer and homodimer. Part of the essential Sec protein translocation apparatus which comprises SecA, SecYEG and auxiliary proteins SecDF. Other proteins may also be involved. Zn(2+) serves as cofactor.

The protein resides in the cell inner membrane. The protein localises to the cytoplasm. It catalyses the reaction ATP + H2O + cellular proteinSide 1 = ADP + phosphate + cellular proteinSide 2.. Part of the Sec protein translocase complex. Interacts with the SecYEG preprotein conducting channel. Has a central role in coupling the hydrolysis of ATP to the transfer of proteins into and across the cell membrane, serving as an ATP-driven molecular motor driving the stepwise translocation of polypeptide chains across the membrane. The protein is Protein translocase subunit SecA of Protochlamydia amoebophila (strain UWE25).